We begin with the raw amino-acid sequence, 118 residues long: ATP synthase subunit g, mitochondrial (118 aa).

The protein belongs to the ATPase g subunit family. As to quaternary structure, F-type ATPases have 2 components, CF(1) - the catalytic core - and CF(0) - the membrane proton channel.

It localises to the mitochondrion membrane. Functionally, mitochondrial membrane ATP synthase (F(1)F(0) ATP synthase or Complex V) produces ATP from ADP in the presence of a proton gradient across the membrane which is generated by electron transport complexes of the respiratory chain. F-type ATPases consist of two structural domains, F(1) - containing the extramembraneous catalytic core, and F(0) - containing the membrane proton channel, linked together by a central stalk and a peripheral stalk. During catalysis, ATP synthesis in the catalytic domain of F(1) is coupled via a rotary mechanism of the central stalk subunits to proton translocation. Part of the complex F(0) domain. Minor subunit located with subunit a in the membrane. The polypeptide is ATP synthase subunit g, mitochondrial (atp20) (Schizosaccharomyces pombe (strain 972 / ATCC 24843) (Fission yeast)).